A 211-amino-acid polypeptide reads, in one-letter code: tRNA (guanine-N(7)-)-methyltransferase (211 aa).

Positions 43, 68, 95, and 117 each coordinate S-adenosyl-L-methionine. Lysine 121 contributes to the substrate binding site. The interval 123 to 128 is interaction with RNA; it reads RHNKRR. Substrate is bound by residues aspartate 153 and 190–193; that span reads TEYE.

It belongs to the class I-like SAM-binding methyltransferase superfamily. TrmB family.

The enzyme catalyses guanosine(46) in tRNA + S-adenosyl-L-methionine = N(7)-methylguanosine(46) in tRNA + S-adenosyl-L-homocysteine. The protein operates within tRNA modification; N(7)-methylguanine-tRNA biosynthesis. In terms of biological role, catalyzes the formation of N(7)-methylguanine at position 46 (m7G46) in tRNA. The polypeptide is tRNA (guanine-N(7)-)-methyltransferase (Clostridium tetani (strain Massachusetts / E88)).